The following is a 311-amino-acid chain: Syntaxin-111 (311 aa).

The Cytoplasmic segment spans residues 1–284 (MNDLMTKSFM…AREHQRSSRK (284 aa)). The t-SNARE coiled-coil homology domain maps to 213–275 (VHEIQDRHDA…QGGNKELRKA (63 aa)). Residues 285 to 305 (WLCIGIIILLLLVLLVIVPIA) form a helical; Anchor for type IV membrane protein membrane-spanning segment. The Vesicular segment spans residues 306–311 (TSFKRS).

This sequence belongs to the syntaxin family. Expressed in roots and panicles.

The protein localises to the cell membrane. The protein resides in the cytoplasm. In terms of biological role, vesicle trafficking protein that functions in the secretory pathway. The chain is Syntaxin-111 from Oryza sativa subsp. japonica (Rice).